Here is a 405-residue protein sequence, read N- to C-terminus: Lipase lipl-1 (405 aa).

The first 20 residues, 1 to 20, serve as a signal peptide directing secretion; sequence MRSWSTVMLAVLATAATVFG. N-linked (GlcNAc...) asparagine glycosylation occurs at N66. The active-site Nucleophile is S169. N-linked (GlcNAc...) asparagine glycosylation is present at N273. Residues D344 and H376 each act as charge relay system in the active site.

The protein belongs to the AB hydrolase superfamily. Lipase family.

It localises to the secreted. The protein resides in the lysosome lumen. Its function is as follows. Lipase that, together with lipl-3, plays a role in the response to nutrient deprivation by controlling lipid metabolism. Specifically, involved in the breakdown of lipids during lipophagy, a process during which lipids contained in lipid droplets that have been delivered to lysosomes by autophagy are degraded. The chain is Lipase lipl-1 from Caenorhabditis elegans.